The primary structure comprises 242 residues: NAD-dependent protein deacetylase (242 aa).

Residues 1–242 enclose the Deacetylase sirtuin-type domain; the sequence is MQQFEEVHSI…EFVEGLSSRK (242 aa). 8 residues coordinate NAD(+): alanine 23, threonine 27, phenylalanine 34, arginine 35, glutamine 102, isoleucine 104, aspartate 105, and histidine 120. Position 34 (phenylalanine 34) interacts with nicotinamide. The nicotinamide site is built by isoleucine 104 and aspartate 105. Histidine 120 serves as the catalytic Proton acceptor. Positions 128, 131, 148, and 151 each coordinate Zn(2+). The NAD(+) site is built by threonine 187, serine 188, asparagine 213, and isoleucine 231.

It belongs to the sirtuin family. Class U subfamily. Zn(2+) serves as cofactor.

It localises to the cytoplasm. The enzyme catalyses N(6)-acetyl-L-lysyl-[protein] + NAD(+) + H2O = 2''-O-acetyl-ADP-D-ribose + nicotinamide + L-lysyl-[protein]. Functionally, NAD-dependent protein deacetylase which modulates the activities of several enzymes which are inactive in their acetylated form. In Bacillus cereus (strain ATCC 10987 / NRS 248), this protein is NAD-dependent protein deacetylase.